The following is a 177-amino-acid chain: MSRVGKLPITIPEGVKVGLNDLEVKISGPKGELSKTFKGNIAISLEENKLLVKPLAANKNARAMWGTARSIISNMVTGVKEGFKLKLEINGVGYRAMVKGKYLNLMLAKSHNTKIEIPSDIKIEVPKQNIIILEGTDKEKLGQFASIIIKQRPPEPYKGKGIKFENQFIPRKEGKKN.

It belongs to the universal ribosomal protein uL6 family. In terms of assembly, part of the 50S ribosomal subunit.

In terms of biological role, this protein binds to the 23S rRNA, and is important in its secondary structure. It is located near the subunit interface in the base of the L7/L12 stalk, and near the tRNA binding site of the peptidyltransferase center. This chain is Large ribosomal subunit protein uL6, found in Rickettsia felis (strain ATCC VR-1525 / URRWXCal2) (Rickettsia azadi).